Consider the following 69-residue polypeptide: DNA gyrase inhibitor YacG (69 aa).

Zn(2+) contacts are provided by Cys13, Cys16, Cys32, and Cys36.

The protein belongs to the DNA gyrase inhibitor YacG family. Interacts with GyrB. The cofactor is Zn(2+).

Functionally, inhibits all the catalytic activities of DNA gyrase by preventing its interaction with DNA. Acts by binding directly to the C-terminal domain of GyrB, which probably disrupts DNA binding by the gyrase. The sequence is that of DNA gyrase inhibitor YacG from Neisseria meningitidis serogroup A / serotype 4A (strain DSM 15465 / Z2491).